Consider the following 1135-residue polypeptide: MRILKLLELVVKVSLFTIALSSVLLAFLIFRATDAKVEIIRGDHPEIYDDSAENEVPTAASIQREAILETLTNLMLESRTPGTRQIREEKSTIPISAEPTTQKTISVLDLPNNCLNASSLKCEIKGISTYNVYYQVENNGVIYSCVSDSAEGLEKCDNSLNLPKRFSKVPVIPITKLDKKRHFSVGGKFFISESLTQDNYPITYNSYPTNGTVSLQTVKLSGDCKITKSNFANPYTVSITSPEKIMGYLIKKPGENVEHKVISFSGSASITFTEEMLDGEHNLLCGDKSAKIPKTNKRVRDCIIKYSKSIYKQTACINFSWIRLILIALLIYFPIRWLVNKTTKPLFLWYDLMGLITYPVLLLINCLWKYFPLKCSNCGNLCIVTHECTKVCICNKSKASKEHSSECPILSKEADHDYNKHKWTSMEWFHLIVNTKLSLSLLKFVTEILIGLVILSQMPMSMAQTTQCLSGCFYVPGCPFLVTSKFEKCSEKDQCYCNVKEDKIIESIFGTNIVIEGPNDCIENQNCIARPSIDNLIKCRLGCEYLDLFRNKPLYNGFSDYTGSSLGLTSVGLYEAKRLRNGIIDSYNRQGKISGMVAGDSLNKNETSIPENILPRQSLIFDSVVDGKYRYMIEQSLLGGGGTIFMLNDKTSETAKKFVIYIKSVGIHYEVSEKYTTAPIQSTHTDFYSTCTGNCDTCRKNQALTGFQDFCVTPTSYWGCEEAWCFAINEGATCGFCRNIYDMDKSYRIYSVLKSTIVADVCISGILGGQCSRITEEVPYENTLFQADIQADLHNDGITIGELIAHGPDSHIYSGNIANLNDPVKMFGHPQLTHDGVPIFTKKTLEGDDMSWDCAAIGKKSVTIKTCGYDTYRFRSGLEQISDIPVSFKDFSSFFLAKSFSLGKLKMVVDLPSDLFKVAPKKPSITSTSLNCNGCLLCGQGLSCLLEFFSDLTFSTAISIDACSLSTYQLAVKKGSNKYNITMFCSANPDKKKMTLYPEGNPDISVEVLVNNVIVEEPENIIDQNDEYAHEEQQYNSDSSAWGFWDYIKSPFNFIASYFGSFFDTIRVVLLIAFIFLVTYFCSILTSICKGYVKNESYKSRSKIEDDDEPEIKAPMLMKDTMTRRRPPMDFSHLV.

An N-terminal signal peptide occupies residues 1–35 (MRILKLLELVVKVSLFTIALSSVLLAFLIFRATDA). Over 36-314 (KVEIIRGDHP…KYSKSIYKQT (279 aa)) the chain is Lumenal. Residues 41 to 43 (RGD) carry the Cell attachment site motif. Cystine bridges form between C114/C145 and C122/C156. The N-linked (GlcNAc...) asparagine; by host glycan is linked to N116. The interval 177-195 (LDKKRHFSVGGKFFISESL) is non-covalent dimerization. The N-linked (GlcNAc...) asparagine; by host glycan is linked to N210. The cysteines at positions 224 and 285 are disulfide-linked. A helical membrane pass occupies residues 315–366 (ACINFSWIRLILIALLIYFPIRWLVNKTTKPLFLWYDLMGLITYPVLLLINC). Topologically, residues 367-484 (LWKYFPLKCS…VPGCPFLVTS (118 aa)) are cytoplasmic. Positions 437-484 (LSLSLLKFVTEILIGLVILSQMPMSMAQTTQCLSGCFYVPGCPFLVTS) are signal for signal peptide peptidase. Residues 485–1067 (KFEKCSEKDQ…YFGSFFDTIR (583 aa)) lie on the Lumenal side of the membrane. N605 and N980 each carry an N-linked (GlcNAc...) asparagine; by host glycan. The helical transmembrane segment at 1068-1088 (VVLLIAFIFLVTYFCSILTSI) threads the bilayer. Topologically, residues 1089-1135 (CKGYVKNESYKSRSKIEDDDEPEIKAPMLMKDTMTRRRPPMDFSHLV) are cytoplasmic.

The protein belongs to the tospovirus envelope glycoprotein family. As to quaternary structure, homodimer; disulfide-linked. Heterodimer with Glycoprotein C. Interacts with nucleoprotein. In terms of assembly, heterodimer with Glycoprotein N. Interacts with nucleoprotein. In terms of processing, specific enzymatic cleavages in vivo yield mature proteins including Glycoprotein N and Glycoprotein C. Post-translationally, glycosylated with O-linked glycans. Glycosylation is essential for proper subcellular location. Cleaved at acidic pH.

The protein resides in the virion membrane. Its subcellular location is the host Golgi apparatus membrane. It localises to the host endoplasmic reticulum membrane. Functionally, forms the spikes present at the surface of the virion together with Glycoprotein C. They are able to attach the virion to a cell receptor and to promote fusion of membranes after endocytosis of the virion. Plays a role in virus binding and/or entry into the vector midgut. Forms the spikes present at the surface of the virion together with Glycoprotein N. They are able to attach the virion to a cell receptor and to promote fusion of membranes after endocytosis of the virion. Probable class II fusion protein. The polypeptide is Envelopment polyprotein (GP) (Tomato spotted wilt virus (strain Brazilian Br-01) (TSWV)).